The chain runs to 832 residues: tRNA ligase (832 aa).

Catalysis depends on Lys-108, which acts as the N6-AMP-lysine intermediate.

It belongs to the TRL1 family.

The catalysed reaction is ATP + (ribonucleotide)n-3'-hydroxyl + 5'-phospho-(ribonucleotide)m = (ribonucleotide)n+m + AMP + diphosphate.. In terms of biological role, one of the two proteins required for the splicing of precursor tRNA molecules containing introns. The ligation activity requires three enzymatic activities: phosphorylation of the 5' terminus of the 3' half-tRNA in the presence of ATP, opening of the 2'3'-cyclic phosphodiester bond of the 5' half-tRNA leaving a 2'-phosphomonoester and ligation of the two tRNA halves in an ATP-dependent reaction. The protein is tRNA ligase (LIG1) of Candida albicans (strain SC5314 / ATCC MYA-2876) (Yeast).